The chain runs to 528 residues: Peptide chain release factor 3 (528 aa).

Residues 11–279 (SDRRTFAIIS…GFVEWAPAPI (269 aa)) form the tr-type G domain. GTP contacts are provided by residues 20–27 (SHPDAGKT), 88–92 (DTPGH), and 142–145 (NKMD).

The protein belongs to the TRAFAC class translation factor GTPase superfamily. Classic translation factor GTPase family. PrfC subfamily.

It is found in the cytoplasm. Functionally, increases the formation of ribosomal termination complexes and stimulates activities of RF-1 and RF-2. It binds guanine nucleotides and has strong preference for UGA stop codons. It may interact directly with the ribosome. The stimulation of RF-1 and RF-2 is significantly reduced by GTP and GDP, but not by GMP. This Marinomonas sp. (strain MWYL1) protein is Peptide chain release factor 3.